Reading from the N-terminus, the 296-residue chain is (3R)-3-[(carboxymethyl)amino]fatty acid oxygenase/decarboxylase (296 aa).

(3R)-3-[(carboxymethyl)amino]butanoate is bound by residues Tyr66, Tyr71, and Gly98. (3R)-3-{[carboxy(hydroxy)methyl]amino}butanoate contacts are provided by Tyr66, Tyr71, and Gly98. Fe(2+)-binding residues include His102 and Asp104. 2 residues coordinate (3R)-3-[(carboxymethyl)amino]butanoate: Tyr105 and Lys163. Residues Tyr105 and Lys163 each contribute to the (3R)-3-{[carboxy(hydroxy)methyl]amino}butanoate site. His265 lines the Fe(2+) pocket. His269 is a binding site for 2-oxoglutarate. (3R)-3-[(carboxymethyl)amino]butanoate is bound at residue Arg280. Residue Arg280 coordinates (3R)-3-{[carboxy(hydroxy)methyl]amino}butanoate.

Belongs to the TfdA dioxygenase family. Fe(2+) serves as cofactor.

The catalysed reaction is a (3R)-3-[(carboxymethyl)amino]fatty acid + 2 2-oxoglutarate + 2 O2 = a (3R)-3-isocyanyl-fatty acid + 2 succinate + 3 CO2 + 2 H2O. The enzyme catalyses a (3R)-3-[(carboxymethyl)amino]fatty acid + 2-oxoglutarate + O2 = a (3R)-3-{[carboxy(hydroxy)methyl]amino}fatty acid + succinate + CO2. It carries out the reaction a (3R)-3-{[carboxy(hydroxy)methyl]amino}fatty acid + 2-oxoglutarate + O2 = a (3R)-3-isocyanyl-fatty acid + succinate + 2 CO2 + 2 H2O. It catalyses the reaction (3R)-3-[(carboxymethyl)amino]butanoate + 2 2-oxoglutarate + 2 O2 = (3R)-3-isocyanylbutanoate + 2 succinate + 3 CO2 + 2 H2O. The catalysed reaction is (3R)-3-[(carboxymethyl)amino]butanoate + 2-oxoglutarate + O2 = (3R)-3-{[carboxy(hydroxy)methyl]amino}butanoate + succinate + CO2. The enzyme catalyses (3R)-3-{[carboxy(hydroxy)methyl]amino}butanoate + 2-oxoglutarate + O2 = (3R)-3-isocyanylbutanoate + succinate + 2 CO2 + 2 H2O. Its function is as follows. Involved in the biosynthesis of a unique class of isonitrile lipopeptides (INLPs). Catalyzes the conversion of (3R)-3-[(carboxymethyl)amino]fatty acids such as (3R)-3-[(carboxymethyl)amino]butanoate (CABA) to (3R)-3-isocyanylbutanoate (INBA) through an oxidative decarboxylation mechanism, thereby generating the isonitrile group of INLPs. This Streptomyces coeruleorubidus protein is (3R)-3-[(carboxymethyl)amino]fatty acid oxygenase/decarboxylase.